An 81-amino-acid chain; its full sequence is Photosystem I iron-sulfur center (81 aa).

4Fe-4S ferredoxin-type domains follow at residues 2–31 (SHAVKIYDTCIGCTQCVRACPLDVLEMVPW) and 37–68 (GQIASSPRTEDCVGCKRCETACPTDFLSIRVY). [4Fe-4S] cluster contacts are provided by Cys-11, Cys-14, Cys-17, Cys-21, Cys-48, Cys-51, Cys-54, and Cys-58.

The cyanobacterial PSI reaction center is composed of one copy each of PsaA,B,C,D,E,F,I,J,K,L,M and X, and forms trimeric complexes. [4Fe-4S] cluster serves as cofactor.

It is found in the cellular thylakoid membrane. It carries out the reaction reduced [plastocyanin] + hnu + oxidized [2Fe-2S]-[ferredoxin] = oxidized [plastocyanin] + reduced [2Fe-2S]-[ferredoxin]. Functionally, apoprotein for the two 4Fe-4S centers FA and FB of photosystem I (PSI); essential for photochemical activity. FB is the terminal electron acceptor of PSI, donating electrons to ferredoxin. The C-terminus interacts with PsaA/B/D and helps assemble the protein into the PSI complex. Required for binding of PsaD and PsaE to PSI. PSI is a plastocyanin/cytochrome c6-ferredoxin oxidoreductase, converting photonic excitation into a charge separation, which transfers an electron from the donor P700 chlorophyll pair to the spectroscopically characterized acceptors A0, A1, FX, FA and FB in turn. The sequence is that of Photosystem I iron-sulfur center from Synechococcus sp. (strain WH7803).